Reading from the N-terminus, the 386-residue chain is Formate-dependent phosphoribosylglycinamide formyltransferase (386 aa).

Residues 15-16 and Glu75 contribute to the N(1)-(5-phospho-beta-D-ribosyl)glycinamide site; that span reads EL. ATP is bound by residues Arg107, Lys148, 153 to 158, 188 to 191, and Glu196; these read SSGKGQ and EQFI. The 190-residue stretch at 112-301 folds into the ATP-grasp domain; that stretch reads ALAAQQLNLQ…EFELHLRAIV (190 aa). The Mg(2+) site is built by Glu260 and Glu272. N(1)-(5-phospho-beta-D-ribosyl)glycinamide contacts are provided by residues Asp279, Lys349, and 356-357; that span reads RR.

It belongs to the PurK/PurT family. In terms of assembly, homodimer.

The enzyme catalyses N(1)-(5-phospho-beta-D-ribosyl)glycinamide + formate + ATP = N(2)-formyl-N(1)-(5-phospho-beta-D-ribosyl)glycinamide + ADP + phosphate + H(+). The protein operates within purine metabolism; IMP biosynthesis via de novo pathway; N(2)-formyl-N(1)-(5-phospho-D-ribosyl)glycinamide from N(1)-(5-phospho-D-ribosyl)glycinamide (formate route): step 1/1. In terms of biological role, involved in the de novo purine biosynthesis. Catalyzes the transfer of formate to 5-phospho-ribosyl-glycinamide (GAR), producing 5-phospho-ribosyl-N-formylglycinamide (FGAR). Formate is provided by PurU via hydrolysis of 10-formyl-tetrahydrofolate. The protein is Formate-dependent phosphoribosylglycinamide formyltransferase of Francisella tularensis subsp. tularensis (strain WY96-3418).